A 231-amino-acid polypeptide reads, in one-letter code: Thymidylate kinase (231 aa).

Residue 10-17 (GGEGAGKT) participates in ATP binding.

The protein belongs to the thymidylate kinase family.

The enzyme catalyses dTMP + ATP = dTDP + ADP. In terms of biological role, phosphorylation of dTMP to form dTDP in both de novo and salvage pathways of dTTP synthesis. The protein is Thymidylate kinase of Acaryochloris marina (strain MBIC 11017).